We begin with the raw amino-acid sequence, 445 residues long: Fatty acid desaturase 3 (445 aa).

A disordered region spans residues 1–21 (MGGVGEPGPREGPAQPGAPLP). The Cytoplasmic segment spans residues 1–133 (MGGVGEPGPR…DMKLFDASPT (133 aa)). Residues 20–97 (LPTFCWEQIR…LQPLLIGELA (78 aa)) enclose the Cytochrome b5 heme-binding domain. Residues 134-154 (FFAFLLGHILAMEVLAWLLIY) form a helical membrane-spanning segment. Residues 155-159 (LLGPG) are Lumenal-facing. The helical transmembrane segment at 160-180 (WVPSALAAFILAISQAQSWCL) threads the bilayer. Residues 181-263 (QHDLGHASIF…KRRYLPYNQQ (83 aa)) lie on the Cytoplasmic side of the membrane. Residues 182–186 (HDLGH) carry the Histidine box-1 motif. Residues 219–223 (HFQHH) carry the Histidine box-2 motif. A helical transmembrane segment spans residues 264 to 284 (HLYFFLIGPPLLTLVNFEVEN). Residues 285–306 (LAYMLVCMQWADLLWAASFYAR) lie on the Lumenal side of the membrane. Residues 307–327 (FFLSYLPFYGVPGVLLFFVAV) form a helical membrane-spanning segment. Topologically, residues 328–445 (RVLESHWFVW…DIWLDAYLHQ (118 aa)) are cytoplasmic. A Histidine box-3 motif is present at residues 383-387 (QIEHH).

This sequence belongs to the fatty acid desaturase type 1 family. In terms of tissue distribution, highly expressed in various organs and tissues including liver, kidney, brain, lung, pancreas, testis, ovary and skeletal muscle (at protein level).

It localises to the endoplasmic reticulum membrane. It catalyses the reaction an N-acylsphing-4-enine + 2 Fe(II)-[cytochrome b5] + O2 + 2 H(+) = an N-acyl-sphinga-4E,14Z-dienine + 2 Fe(III)-[cytochrome b5] + 2 H2O. The enzyme catalyses N-(hexanoyl)sphing-4-enine + 2 Fe(II)-[cytochrome b5] + O2 + 2 H(+) = N-hexanoyl-sphinga-4E,14Z-dienine + 2 Fe(III)-[cytochrome b5] + 2 H2O. It carries out the reaction sphing-4-enine + 2 Fe(II)-[cytochrome b5] + O2 + 2 H(+) = sphinga-4E,14Z-dienine + 2 Fe(III)-[cytochrome b5] + 2 H2O. The catalysed reaction is (11E)-octadecenoyl-CoA + 2 Fe(II)-[cytochrome b5] + O2 + 2 H(+) = (11E,13Z)-octadecadienoyl-CoA + 2 Fe(III)-[cytochrome b5] + 2 H2O. It catalyses the reaction N-acyl-1-deoxysphinganine + 2 Fe(II)-[cytochrome b5] + O2 + 2 H(+) = N-acyl-1-deoxysphing-14Z-enine + 2 Fe(III)-[cytochrome b5] + 2 H2O. The enzyme catalyses an N-acylsphinganine + 2 Fe(II)-[cytochrome b5] + O2 + 2 H(+) = an N-acylsphing-14Z-enine + 2 Fe(III)-[cytochrome b5] + 2 H2O. Its pathway is lipid metabolism; sphingolipid metabolism. The protein operates within lipid metabolism; polyunsaturated fatty acid biosynthesis. Mammals have different sphingoid bases that differ in their length and/or pattern of desaturation and hydroxyl groups. The predominant sphingoid base that comprises mammalian ceramides is sphing-4-enine (sphingosine or SPH) which has a trans (E) desaturation at carbon 4. FADS3 is a desaturase that introduces a cis (Z) double bond between carbon 14 and carbon 15 of the sphingoid base (also known as long chain base, LCB), producing LCBs such as sphinga-4,14-dienine (SPD, d18:2(4E,14Z)) from SPH. Prefers SPH-containing ceramides (N-acylsphing-4-enines) as substrates. Capable of metabolizing also the SPH in its free form. SPD ceramides occur widely in mammalian tissues and cells. Due to their unusual structure containing a cis double bond, SPD ceramides may have an opposite, negative role in lipid microdomain formation relative to conventional ceramides. Could be involved in the detoxification of 1-deoxy sphingolipids, by desaturating the cytotoxic 1-deoxysphinganine (1-deoxySA, m18:0), produced under pathological conditions, to 1-deoxysphingenine (1-deoxysphingosine, 1-deoxySO, m18:1). Although prefers SPH-containing ceramides (N-acylsphing-4-enines) as substrates, it also exhibits activity toward dihydrosphingosine-containing CERs (N-acylsphinganines) and produces 14Z-SPH-containing sphingolipids,which can be found in patients with DEGS1 mutations. Its desaturase mechanism involves an electron transfer facilitated by cytochrome b5. FADS3 also acts as a methyl-end fatty acyl coenzyme A (CoA) desaturase that introduces a cis double bond between the preexisting double bond and the terminal methyl group of the fatty acyl chain. Desaturates (11E)-octadecenoate (trans-vaccenoate, the predominant trans fatty acid in human milk) at carbon 13 to generate (11E,13Z)-octadecadienoate (also known as conjugated linoleic acid 11E,13Z-CLA). This Homo sapiens (Human) protein is Fatty acid desaturase 3.